A 146-amino-acid polypeptide reads, in one-letter code: MKSYYFESNEPVSVQQLNNINVLYYPMPMPDYQEKLDQICQERGYKNRDEVKLNENTENLDAKLKIFFEEHLHDDEEIRFILEGSGFFDVRDANDQWIRIRVEKGDLIIVPANMYHRFTLTETKQIHACRLFTDAPKWVPINRHQQ.

Residues His-71, His-73, Glu-77, and His-116 each coordinate Fe(2+). Residues His-71, His-73, Glu-77, and His-116 each coordinate Ni(2+).

It belongs to the acireductone dioxygenase (ARD) family. The cofactor is Fe(2+). Ni(2+) is required as a cofactor.

It localises to the cytoplasm. The protein resides in the nucleus. The enzyme catalyses 1,2-dihydroxy-5-(methylsulfanyl)pent-1-en-3-one + O2 = 4-methylsulfanyl-2-oxobutanoate + formate + 2 H(+). It carries out the reaction 1,2-dihydroxy-5-(methylsulfanyl)pent-1-en-3-one + O2 = 3-(methylsulfanyl)propanoate + CO + formate + 2 H(+). Its pathway is amino-acid biosynthesis; L-methionine biosynthesis via salvage pathway; L-methionine from S-methyl-5-thio-alpha-D-ribose 1-phosphate: step 5/6. Its function is as follows. Catalyzes 2 different reactions between oxygen and the acireductone 1,2-dihydroxy-3-keto-5-methylthiopentene (DHK-MTPene) depending upon the metal bound in the active site. Fe-containing acireductone dioxygenase (Fe-ARD) produces formate and 2-keto-4-methylthiobutyrate (KMTB), the alpha-ketoacid precursor of methionine in the methionine recycle pathway. Ni-containing acireductone dioxygenase (Ni-ARD) produces methylthiopropionate, carbon monoxide and formate, and does not lie on the methionine recycle pathway. The polypeptide is Acireductone dioxygenase (Heterostelium pallidum (strain ATCC 26659 / Pp 5 / PN500) (Cellular slime mold)).